Here is a 284-residue protein sequence, read N- to C-terminus: Acetyl-coenzyme A carboxylase carboxyl transferase subunit beta (284 aa).

One can recognise a CoA carboxyltransferase N-terminal domain in the interval 25-284 (LWTKCPKCES…ICRMLLQKSA (260 aa)). Cys29, Cys32, Cys48, and Cys51 together coordinate Zn(2+). A C4-type zinc finger spans residues 29 to 51 (CPKCESTLYRAEVRRNLEVCPKC).

It belongs to the AccD/PCCB family. Acetyl-CoA carboxylase is a heterohexamer composed of biotin carboxyl carrier protein (AccB), biotin carboxylase (AccC) and two subunits each of ACCase subunit alpha (AccA) and ACCase subunit beta (AccD). The cofactor is Zn(2+).

The protein localises to the cytoplasm. The catalysed reaction is N(6)-carboxybiotinyl-L-lysyl-[protein] + acetyl-CoA = N(6)-biotinyl-L-lysyl-[protein] + malonyl-CoA. It participates in lipid metabolism; malonyl-CoA biosynthesis; malonyl-CoA from acetyl-CoA: step 1/1. Component of the acetyl coenzyme A carboxylase (ACC) complex. Biotin carboxylase (BC) catalyzes the carboxylation of biotin on its carrier protein (BCCP) and then the CO(2) group is transferred by the transcarboxylase to acetyl-CoA to form malonyl-CoA. The chain is Acetyl-coenzyme A carboxylase carboxyl transferase subunit beta from Hydrogenovibrio crunogenus (strain DSM 25203 / XCL-2) (Thiomicrospira crunogena).